Consider the following 470-residue polypeptide: Acyltransferase BOA11 (470 aa).

The Proton acceptor role is filled by His-156.

The protein belongs to the plant acyltransferase family.

It participates in polyketide biosynthesis. Functionally, acyltransferase; part of the gene cluster B that mediates the biosynthesis of botcinic acid and its botcinin derivatives, acetate-derived polyketides that contribute to virulence when combined with the sesquiterpene botrydial. Botcinic acid and its derivatives have been shown to induce chlorosis and necrosis during host plant infection, but also have antifungal activities. Two polyketide synthases, BOA6 and BOA9, are involved in the biosynthesis of botcinins. BOA6 mediates the formation of the per-methylated tetraketide core by condensation of four units of malonyl-CoA with one unit of acetyl-CoA, which would be methylated in activated methylene groups to yield a bicyclic acid intermediate that could then either be converted to botrylactone derivatives or lose the starter acetate unit through a retro-Claisen type C-C bond cleavage to yield botcinin derivatives. The second polyketide synthase, BOA9, is probably required for the biosynthesis of the tetraketide side chain of botcinins. The methyltransferase (MT) domain within BOA6 is probably responsible for the incorporation of four methyl groups. The trans-enoyl reductase BOA5 might take over the enoyl reductase function of BOA6 that misses an ER domain. The monooxygenases BOA2, BOA3 and BOA4 might be involved in further hydroxylations at C4, C5 and C8, whereas BOA7, close to BOA9, could potentially be involved in the hydroxylation at C4 in the side chain of botcinins. This is Acyltransferase BOA11 from Botryotinia fuckeliana (strain B05.10) (Noble rot fungus).